The chain runs to 1071 residues: SLIT-ROBO Rho GTPase-activating protein 2 (1071 aa).

An F-BAR domain is found at 22 to 325; it reads KEIRAQLTEQ…AVENLDATSD (304 aa). The span at 181-203 shows a compositional bias: basic and acidic residues; it reads LKEAEKQEEKQIGKSVKQEDRQT. The disordered stretch occupies residues 181–211; that stretch reads LKEAEKQEEKQIGKSVKQEDRQTPRSPDSTA. Ser206 carries the post-translational modification Phosphoserine. Residues 363–401 adopt a coiled-coil conformation; sequence QSELVQRCQQLQSRLSTLKIENEEVKKTMEATLQTIQDI. Ser427, Ser500, Ser691, and Ser695 each carry phosphoserine. A Rho-GAP domain is found at 489–679; sequence ARRSSTVRKQ…TIIIQHENIF (191 aa). The disordered stretch occupies residues 700–726; it reads CDSTHGETTSAEDSTQDVTAEHHTSDD. The span at 705 to 717 shows a compositional bias: polar residues; it reads GETTSAEDSTQDV. Ser724 bears the Phosphoserine mark. The region spanning 728–787 is the SH3 domain; the sequence is CEPIEAIAKFDYVGRTARELSFKKGASLLLYQRASDDWWEGRHNGIDGLIPHQYIVVQDT. A Phosphoserine modification is found at Ser795. 2 disordered regions span residues 795-819 and 838-918; these read SSPK…TGAS and RKRP…DSPQ. Residues 855–868 show a composition bias toward low complexity; sequence HGLGSSLTDSSSLG. Composition is skewed to polar residues over residues 874–885 and 897–907; these read RPSSQPIMSQNL and GHGSLNSISRH. Ser916 carries the phosphoserine modification. Arg927 bears the Symmetric dimethylarginine; by PRMT5 mark. A Phosphoserine modification is found at Ser930. A coiled-coil region spans residues 940–968; the sequence is EVIAQDIEATMNSALNELQELERQSSAKH. A disordered region spans residues 984–1012; that stretch reads PVVAPTSEPSSPLHTQLLKDPEPAFQRSA. Residues Ser990, Ser994, Ser1013, and Ser1027 each carry the phosphoserine modification. A disordered region spans residues 1029 to 1071; that stretch reads KMAAPVKPPATRPKPTVFPKTNATSPGVNSSASPQATDKSCTV. The segment covering 1047–1071 has biased composition (polar residues); sequence PKTNATSPGVNSSASPQATDKSCTV.

In terms of assembly, homodimer. Forms a heterooligomer with SRGAP1 and SRGAP3 through its F-BAR domain. Interacts (via SH3 domain) with GPHN. Interacts (via SH3 domain) with FMNL1 (activated by RAC1); regulates the actin filament severing activity of FMNL1 and actin dynamics. Interacts (via SH3 domain) with FMNL3. Interacts with RAC1; specifically stimulates RAC1 GTPase activity. Interacts (via F-BAR domain) with HOMER1. Interacts with ROBO1 and ROBO2. Interacts with FASLG. Interacts with PRMT5. Post-translationally, methylation at Arg-927 is required for the stimulation of cell migration, dimerization and localization at the plasma membrane protrusions.

The protein localises to the cell membrane. It localises to the cell projection. It is found in the dendritic spine. Its subcellular location is the postsynaptic density. The protein resides in the postsynaptic cell membrane. The protein localises to the lamellipodium. It localises to the cytoplasmic vesicle. It is found in the phagosome. Its subcellular location is the nucleus. The protein resides in the cytoplasm. The protein localises to the cytosol. Postsynaptic RAC1 GTPase activating protein (GAP) that plays a key role in neuronal morphogenesis and migration mainly during development of the cerebral cortex. Regulates excitatory and inhibitory synapse maturation and density in cortical pyramidal neurons. SRGAP2/SRGAP2A limits excitatory and inhibitory synapse density through its RAC1-specific GTPase activating activity, while it promotes maturation of both excitatory and inhibitory synapses through its ability to bind to the postsynaptic scaffolding protein HOMER1 at excitatory synapses, and the postsynaptic protein GPHN at inhibitory synapses. Mechanistically, acts by binding and deforming membranes, thereby regulating actin dynamics to regulate cell migration and differentiation. Promotes cell repulsion and contact inhibition of locomotion: localizes to protrusions with curved edges and controls the duration of RAC1 activity in contact protrusions. In non-neuronal cells, may also play a role in cell migration by regulating the formation of lamellipodia and filopodia. The sequence is that of SLIT-ROBO Rho GTPase-activating protein 2 from Mus musculus (Mouse).